A 445-amino-acid chain; its full sequence is C4-dicarboxylate transport protein 2 (445 aa).

Helical transmembrane passes span 24–44 (ILYV…WLFP), 62–82 (LIKM…IAHI), 96–116 (LVYF…VGNL), 163–183 (GDIL…MALG), 201–221 (FGVI…AMAF), 237–257 (LIAL…GLIA), 334–354 (ALGV…AMLT), and 366–386 (FITL…GMAI).

This sequence belongs to the dicarboxylate/amino acid:cation symporter (DAACS) (TC 2.A.23) family.

Its subcellular location is the cell inner membrane. Its function is as follows. Responsible for the transport of dicarboxylates such as succinate, fumarate, and malate from the periplasm across the membrane. The protein is C4-dicarboxylate transport protein 2 of Bradyrhizobium sp. (strain ORS 278).